Consider the following 253-residue polypeptide: Uridylate kinase (253 aa).

26–29 contacts ATP; it reads KLSG. Glycine 68 contributes to the UMP binding site. 2 residues coordinate ATP: glycine 69 and arginine 73. UMP contacts are provided by residues aspartate 88 and 149 to 156; that span reads TGNPFFTT. 3 residues coordinate ATP: threonine 176, tyrosine 182, and aspartate 185.

This sequence belongs to the UMP kinase family. As to quaternary structure, homohexamer.

It is found in the cytoplasm. The catalysed reaction is UMP + ATP = UDP + ADP. The protein operates within pyrimidine metabolism; CTP biosynthesis via de novo pathway; UDP from UMP (UMPK route): step 1/1. Its activity is regulated as follows. Inhibited by UTP. Its function is as follows. Catalyzes the reversible phosphorylation of UMP to UDP. This is Uridylate kinase from Chromohalobacter salexigens (strain ATCC BAA-138 / DSM 3043 / CIP 106854 / NCIMB 13768 / 1H11).